A 156-amino-acid chain; its full sequence is Protein LlR18A (156 aa).

Trans-zeatin contacts are provided by asparagine 8 and aspartate 28. 2 residues coordinate Ca(2+): proline 32 and isoleucine 38. The trans-zeatin site is built by lysine 54, aspartate 133, and lysine 136.

It belongs to the BetVI family. In terms of tissue distribution, expressed constitutively in roots.

It is found in the cytoplasm. Its subcellular location is the cytosol. Its function is as follows. Class II ribonuclease (RNase). Binds to cytokinins. Interacts with melatonin. The polypeptide is Protein LlR18A (LLR18A) (Lupinus luteus (European yellow lupine)).